Consider the following 184-residue polypeptide: TATA-box-binding protein (184 aa).

Repeat copies occupy residues 9 to 85 and 100 to 178.

This sequence belongs to the TBP family.

General factor that plays a role in the activation of archaeal genes transcribed by RNA polymerase. Binds specifically to the TATA box promoter element which lies close to the position of transcription initiation. The chain is TATA-box-binding protein from Picrophilus torridus (strain ATCC 700027 / DSM 9790 / JCM 10055 / NBRC 100828 / KAW 2/3).